Reading from the N-terminus, the 377-residue chain is Deoxyribonuclease CdiA-o11 (377 aa).

The VENN CT cleavage motif signature appears at 81–84; sequence VENN. Residues 85-233 form an inner membrane translocation domain (IMTD), targets to YciB region; that stretch reads YLSTNQSLTF…ISFMSRNTAT (149 aa). The interval 88–377 is CT domain, sufficient to interact with CdiI; the sequence is TNQSLTFDKE…GVKVTVTQVK (290 aa). The has DNase activity in vivo, cannot be expressed in the absence of CdiI stretch occupies residues 222–377; the sequence is AAISFMSRNT…GVKVTVTQVK (156 aa). Residues glutamate 257, aspartate 278, serine 289, and lysine 291 contribute to the active site. Residues glutamate 257 and aspartate 278 each contribute to the Zn(2+) site.

Interacts with cognate immunity protein CdiI-o11-EC869, which blocks its toxic DNase activity. It depends on Zn(2+) as a cofactor.

It is found in the target cell. The protein localises to the target cell cytoplasm. In terms of biological role, toxic component of a toxin-immunity protein module, which functions as a cellular contact-dependent growth inhibition (CDI) system. CDI modules allow bacteria to communicate with and inhibit the growth of closely related neighboring bacteria in a contact-dependent fashion. The C-terminal 289 residues (the CT fragment) has a strong DNase activity in the presence of Zn(2+), completely degrading supercoiled and linear plasmids, and inhibits growth. In the presence of Mg(2+) it nicks dsDNA. Toxic activity is neutralized by coexpression of the cognate immunity protein CdiI-o11-EC869, but not by non-cognate immunity proteins from other toxin-immunity modules or other strains of E.coli. Gains access to the cytoplasm of target cells by using integral inner membrane protein YciB. Expression of this locus confers protection against other bacteria carrying the locus. This Escherichia coli O157:H7 (strain EC869) protein is Deoxyribonuclease CdiA-o11 (cdiA4).